Reading from the N-terminus, the 73-residue chain is MSKLVILAVLVLLPLVTAEHGRDEQAMQPEKKTMWTLWSLTRRGECDGKKDCITNDDCTGCLCSDFGSYRKCA.

The N-terminal stretch at 1–18 (MSKLVILAVLVLLPLVTA) is a signal peptide. Residues 19–41 (EHGRDEQAMQPEKKTMWTLWSLT) constitute a propeptide that is removed on maturation. Intrachain disulfides connect cysteine 46-cysteine 61, cysteine 52-cysteine 63, and cysteine 58-cysteine 72.

In terms of tissue distribution, expressed by the venom duct.

Its subcellular location is the secreted. This chain is Conotoxin Cl9.2, found in Californiconus californicus (California cone).